Consider the following 367-residue polypeptide: UDP-N-acetylglucosamine--N-acetylmuramyl-(pentapeptide) pyrophosphoryl-undecaprenol N-acetylglucosamine transferase (367 aa).

UDP-N-acetyl-alpha-D-glucosamine-binding positions include threonine 15–glycine 17, asparagine 127, arginine 163, serine 191, isoleucine 249, and glutamine 294.

It belongs to the glycosyltransferase 28 family. MurG subfamily.

The protein resides in the cell inner membrane. It carries out the reaction di-trans,octa-cis-undecaprenyl diphospho-N-acetyl-alpha-D-muramoyl-L-alanyl-D-glutamyl-meso-2,6-diaminopimeloyl-D-alanyl-D-alanine + UDP-N-acetyl-alpha-D-glucosamine = di-trans,octa-cis-undecaprenyl diphospho-[N-acetyl-alpha-D-glucosaminyl-(1-&gt;4)]-N-acetyl-alpha-D-muramoyl-L-alanyl-D-glutamyl-meso-2,6-diaminopimeloyl-D-alanyl-D-alanine + UDP + H(+). It functions in the pathway cell wall biogenesis; peptidoglycan biosynthesis. In terms of biological role, cell wall formation. Catalyzes the transfer of a GlcNAc subunit on undecaprenyl-pyrophosphoryl-MurNAc-pentapeptide (lipid intermediate I) to form undecaprenyl-pyrophosphoryl-MurNAc-(pentapeptide)GlcNAc (lipid intermediate II). This Burkholderia multivorans (strain ATCC 17616 / 249) protein is UDP-N-acetylglucosamine--N-acetylmuramyl-(pentapeptide) pyrophosphoryl-undecaprenol N-acetylglucosamine transferase.